Consider the following 154-residue polypeptide: Telokin (154 aa).

The tract at residues 1-24 (ISGMSGRKASGSSPTSPINANKVE) is disordered. Positions 10–19 (SGSSPTSPIN) are enriched in polar residues. The Ig-like C2-type domain occupies 42-133 (PYFTKTILDM…ATCTAELLVE (92 aa)). The tract at residues 134-154 (TMGKEGEGEGEGEEDEEEEEE) is disordered. Residues 141 to 154 (GEGEGEEDEEEEEE) are compositionally biased toward acidic residues.

Belongs to the protein kinase superfamily. CAMK Ser/Thr protein kinase family. As to quaternary structure, binds calmodulin.

In terms of biological role, corresponds to the C-terminus of smooth muscle myosin light chain kinase. The polypeptide is Telokin (Meleagris gallopavo (Wild turkey)).